The primary structure comprises 415 residues: Gamma-glutamyl phosphate reductase (415 aa).

The protein belongs to the gamma-glutamyl phosphate reductase family.

Its subcellular location is the cytoplasm. It carries out the reaction L-glutamate 5-semialdehyde + phosphate + NADP(+) = L-glutamyl 5-phosphate + NADPH + H(+). Its pathway is amino-acid biosynthesis; L-proline biosynthesis; L-glutamate 5-semialdehyde from L-glutamate: step 2/2. In terms of biological role, catalyzes the NADPH-dependent reduction of L-glutamate 5-phosphate into L-glutamate 5-semialdehyde and phosphate. The product spontaneously undergoes cyclization to form 1-pyrroline-5-carboxylate. The protein is Gamma-glutamyl phosphate reductase of Pseudoalteromonas translucida (strain TAC 125).